The following is a 415-amino-acid chain: Gamma-glutamyl phosphate reductase (415 aa).

The protein belongs to the gamma-glutamyl phosphate reductase family.

The protein localises to the cytoplasm. It catalyses the reaction L-glutamate 5-semialdehyde + phosphate + NADP(+) = L-glutamyl 5-phosphate + NADPH + H(+). It functions in the pathway amino-acid biosynthesis; L-proline biosynthesis; L-glutamate 5-semialdehyde from L-glutamate: step 2/2. Functionally, catalyzes the NADPH-dependent reduction of L-glutamate 5-phosphate into L-glutamate 5-semialdehyde and phosphate. The product spontaneously undergoes cyclization to form 1-pyrroline-5-carboxylate. This chain is Gamma-glutamyl phosphate reductase, found in Bacillus cereus (strain ZK / E33L).